The following is a 252-amino-acid chain: 5'-nucleotidase SurE (252 aa).

Positions 8, 9, 39, and 95 each coordinate a divalent metal cation.

It belongs to the SurE nucleotidase family. It depends on a divalent metal cation as a cofactor.

It is found in the cytoplasm. It carries out the reaction a ribonucleoside 5'-phosphate + H2O = a ribonucleoside + phosphate. Its function is as follows. Nucleotidase that shows phosphatase activity on nucleoside 5'-monophosphates. This is 5'-nucleotidase SurE from Clostridium botulinum (strain Okra / Type B1).